The following is a 354-amino-acid chain: D-alanine--D-alanine ligase (354 aa).

An ATP-grasp domain is found at 133 to 338 (KHLFAQAGLP…YSDLIEQLVE (206 aa)). Residue 166–221 (EKELGYPCFVKPANLGSSVGISKCRNREELEKAFELAFEYDRKIVVEEGIAGREIE) coordinates ATP. Mg(2+)-binding residues include Asp-292, Glu-305, and Asn-307.

Belongs to the D-alanine--D-alanine ligase family. Requires Mg(2+) as cofactor. The cofactor is Mn(2+).

Its subcellular location is the cytoplasm. The enzyme catalyses 2 D-alanine + ATP = D-alanyl-D-alanine + ADP + phosphate + H(+). The protein operates within cell wall biogenesis; peptidoglycan biosynthesis. Cell wall formation. The chain is D-alanine--D-alanine ligase from Bacillus velezensis (strain DSM 23117 / BGSC 10A6 / LMG 26770 / FZB42) (Bacillus amyloliquefaciens subsp. plantarum).